A 270-amino-acid chain; its full sequence is 3-methyl-2-oxobutanoate hydroxymethyltransferase (270 aa).

Positions 43 and 82 each coordinate Mg(2+). 3-methyl-2-oxobutanoate is bound by residues 43–44, Asp82, and Lys112; that span reads DS. Glu114 serves as a coordination point for Mg(2+). Glu179 acts as the Proton acceptor in catalysis.

It belongs to the PanB family. As to quaternary structure, homodecamer; pentamer of dimers. The cofactor is Mg(2+).

The protein localises to the cytoplasm. The catalysed reaction is 3-methyl-2-oxobutanoate + (6R)-5,10-methylene-5,6,7,8-tetrahydrofolate + H2O = 2-dehydropantoate + (6S)-5,6,7,8-tetrahydrofolate. Its pathway is cofactor biosynthesis; (R)-pantothenate biosynthesis; (R)-pantoate from 3-methyl-2-oxobutanoate: step 1/2. Functionally, catalyzes the reversible reaction in which hydroxymethyl group from 5,10-methylenetetrahydrofolate is transferred onto alpha-ketoisovalerate to form ketopantoate. This is 3-methyl-2-oxobutanoate hydroxymethyltransferase from Staphylococcus carnosus (strain TM300).